Here is a 182-residue protein sequence, read N- to C-terminus: Oligoribonuclease (182 aa).

An Exonuclease domain is found at leucine 8–leucine 171. The active site involves tyrosine 129.

This sequence belongs to the oligoribonuclease family.

The protein localises to the cytoplasm. Functionally, 3'-to-5' exoribonuclease specific for small oligoribonucleotides. The chain is Oligoribonuclease from Thiobacillus denitrificans (strain ATCC 25259 / T1).